The chain runs to 211 residues: Thiamine-phosphate synthase (211 aa).

4-amino-2-methyl-5-(diphosphooxymethyl)pyrimidine-binding positions include 43–47 and Asn75; that span reads QLRDK. Mg(2+) contacts are provided by Asp76 and Asp95. Position 114 (Ser114) interacts with 4-amino-2-methyl-5-(diphosphooxymethyl)pyrimidine. 140–142 contacts 2-[(2R,5Z)-2-carboxy-4-methylthiazol-5(2H)-ylidene]ethyl phosphate; the sequence is TAS. Lys143 is a binding site for 4-amino-2-methyl-5-(diphosphooxymethyl)pyrimidine. 2-[(2R,5Z)-2-carboxy-4-methylthiazol-5(2H)-ylidene]ethyl phosphate contacts are provided by residues Gly170 and 190–191; that span reads IS.

The protein belongs to the thiamine-phosphate synthase family. Mg(2+) serves as cofactor.

It catalyses the reaction 2-[(2R,5Z)-2-carboxy-4-methylthiazol-5(2H)-ylidene]ethyl phosphate + 4-amino-2-methyl-5-(diphosphooxymethyl)pyrimidine + 2 H(+) = thiamine phosphate + CO2 + diphosphate. The enzyme catalyses 2-(2-carboxy-4-methylthiazol-5-yl)ethyl phosphate + 4-amino-2-methyl-5-(diphosphooxymethyl)pyrimidine + 2 H(+) = thiamine phosphate + CO2 + diphosphate. The catalysed reaction is 4-methyl-5-(2-phosphooxyethyl)-thiazole + 4-amino-2-methyl-5-(diphosphooxymethyl)pyrimidine + H(+) = thiamine phosphate + diphosphate. The protein operates within cofactor biosynthesis; thiamine diphosphate biosynthesis; thiamine phosphate from 4-amino-2-methyl-5-diphosphomethylpyrimidine and 4-methyl-5-(2-phosphoethyl)-thiazole: step 1/1. Condenses 4-methyl-5-(beta-hydroxyethyl)thiazole monophosphate (THZ-P) and 2-methyl-4-amino-5-hydroxymethyl pyrimidine pyrophosphate (HMP-PP) to form thiamine monophosphate (TMP). This chain is Thiamine-phosphate synthase, found in Coprothermobacter proteolyticus (strain ATCC 35245 / DSM 5265 / OCM 4 / BT).